The primary structure comprises 358 residues: Uroporphyrinogen decarboxylase (358 aa).

Substrate contacts are provided by residues Arg29–Arg33, Phe48, Asp79, Tyr155, Ser210, and His330.

The protein belongs to the uroporphyrinogen decarboxylase family. Homodimer.

It is found in the cytoplasm. The catalysed reaction is uroporphyrinogen III + 4 H(+) = coproporphyrinogen III + 4 CO2. The protein operates within porphyrin-containing compound metabolism; protoporphyrin-IX biosynthesis; coproporphyrinogen-III from 5-aminolevulinate: step 4/4. Its function is as follows. Catalyzes the decarboxylation of four acetate groups of uroporphyrinogen-III to yield coproporphyrinogen-III. The sequence is that of Uroporphyrinogen decarboxylase from Bordetella bronchiseptica (strain ATCC BAA-588 / NCTC 13252 / RB50) (Alcaligenes bronchisepticus).